Consider the following 635-residue polypeptide: MIQITLPDASKREYPQAVTVAEVAASIGAGLAKAALGGKVDGKVVDTSYLIEKDSALSIITAKDADGLELIRHSTAHLLAYAVKELFSEAQVTIGPVIENGFYYDFAYKRPFTPEDLAAIEKRMTELAAKDEPVTRRVLPRDEAVAHFKSIGEHYKAEIIASIPANEDVSLYREGTFEDLCRGPHVPSTGKLKFFKLMKVAGAYWRGDHRNEMLQRVYGTAWATKDELQQYLTMLEEAEKRDHRKLGKELDLFHIDDHAPGLVFWHPKGWTIWQGVEQYMRKVYQDNGYQEVKGPQVIDKTLWEKTGHWDKYRDNMFTTESEKREYALKPMNCPGHILIFKQGIKSYRDLPLRYGEFGQCHRNEPSGGLHGIMRVRGFTQDDGHIFCTEEQILKECVDYTTLLQKVYTDFGFKNIIYKVATRPDARIGSDESWDKAEQALIESLRASGCEFEISPGEGAFYGPKIEYTLKDAIGRQWQCGTMQVDFSMPERLDAEYVGEDGARHRPVMLHRAIVGSLERFIGILIEEHAGALPTWLAPIQVSVLNITDSQAEYAREVAKTLQNQGLRVNLDLRNEKITYKIREHSLQKLPYILVVGDKEKAAGAVAVRARGNKDLGVMSIEAFAQQIASDIAQKA.

One can recognise a TGS domain in the interval 1–61 (MIQITLPDAS…EKDSALSIIT (61 aa)). The tract at residues 242-533 (DHRKLGKELD…LIEEHAGALP (292 aa)) is catalytic. Zn(2+) is bound by residues Cys-333, His-384, and His-510.

The protein belongs to the class-II aminoacyl-tRNA synthetase family. As to quaternary structure, homodimer. The cofactor is Zn(2+).

The protein resides in the cytoplasm. The enzyme catalyses tRNA(Thr) + L-threonine + ATP = L-threonyl-tRNA(Thr) + AMP + diphosphate + H(+). Its function is as follows. Catalyzes the attachment of threonine to tRNA(Thr) in a two-step reaction: L-threonine is first activated by ATP to form Thr-AMP and then transferred to the acceptor end of tRNA(Thr). Also edits incorrectly charged L-seryl-tRNA(Thr). The protein is Threonine--tRNA ligase of Polaromonas sp. (strain JS666 / ATCC BAA-500).